Here is a 67-residue protein sequence, read N- to C-terminus: Large ribosomal subunit protein bL35 (67 aa).

The protein belongs to the bacterial ribosomal protein bL35 family.

The chain is Large ribosomal subunit protein bL35 from Leptothrix cholodnii (strain ATCC 51168 / LMG 8142 / SP-6) (Leptothrix discophora (strain SP-6)).